We begin with the raw amino-acid sequence, 747 residues long: ATPase family gene 2 protein homolog B (747 aa).

Position 1 is an N-acetylmethionine (Met-1). Residues 234–241 (GPPGVGKT) and 500–507 (GPPGCAKT) each bind ATP.

It belongs to the AAA ATPase family. AFG2 subfamily. Part of the 55LCC heterohexameric ATPase complex composed at least of AIRIM, AFG2A, AFG2B and CINP. Associates with pre-60S ribosomal particles. In terms of tissue distribution, in adult ear, expressed at low levels in neurosensory hair cells (inner and outer) and supporting cells (pillar and Deiter cells).

The protein localises to the cytoplasm. It is found in the cytoskeleton. Its subcellular location is the spindle. The protein resides in the nucleus. The catalysed reaction is ATP + H2O = ADP + phosphate + H(+). In the context of 55LCC heterohexameric ATPase complex, the ATPase activity is stimulated by DNA binding and inhibited in presence of RNA. ATP-dependent chaperone part of the 55LCC heterohexameric ATPase complex which is chromatin-associated and promotes replisome proteostasis to maintain replication fork progression and genome stability. Required for replication fork progression, sister chromatid cohesion, and chromosome stability. The ATPase activity is specifically enhanced by replication fork DNA and is coupled to cysteine protease-dependent cleavage of replisome substrates in response to replication fork damage. Uses ATPase activity to process replisome substrates in S-phase, facilitating their proteolytic turnover from chromatin to ensure DNA replication and mitotic fidelity. Plays an essential role in the cytoplasmic maturation steps of pre-60S ribosomal particles by promoting the release of shuttling protein RSL24D1/RLP24 from the pre-ribosomal particles. The protein is ATPase family gene 2 protein homolog B (Afg2b) of Mus musculus (Mouse).